Reading from the N-terminus, the 618-residue chain is Leucine aminopeptidase 2 (618 aa).

A peptide is bound by residues 139-141 (QCQ) and 271-276 (PYGGME). Residue His-300 coordinates Zn(2+). Residue Glu-301 is the Proton acceptor of the active site. Zn(2+)-binding residues include His-304 and Glu-323. The Proton donor role is filled by Tyr-388.

The protein belongs to the peptidase M1 family. It depends on Zn(2+) as a cofactor.

Its subcellular location is the cytoplasm. It localises to the nucleus. It carries out the reaction an epoxide + H2O = an ethanediol. Aminopeptidase that preferentially cleaves di- and tripeptides. Also has low epoxide hydrolase activity (in vitro). Can hydrolyze the epoxide leukotriene LTA(4) but it forms preferentially 5,6-dihydroxy-7,9,11,14-eicosatetraenoic acid rather than the cytokine leukotriene B(4) as the product compared to the homologous mammalian enzyme (in vitro). The sequence is that of Leucine aminopeptidase 2 from Aspergillus niger (strain ATCC MYA-4892 / CBS 513.88 / FGSC A1513).